The primary structure comprises 419 residues: Probable serine/threonine-protein kinase CST (419 aa).

The N-myristoyl glycine moiety is linked to residue Gly-2. Cys-4 carries S-palmitoyl cysteine lipidation. The interval 8 to 48 (FSSSSPSKTGLHSHATTNNHSNGTEFSSTTGATTNSSVGQQ) is disordered. Residues 15 to 48 (KTGLHSHATTNNHSNGTEFSSTTGATTNSSVGQQ) show a composition bias toward polar residues. In terms of domain architecture, Protein kinase spans 86–368 (FKPDSMLGQG…KEVVEVLEHI (283 aa)). An ATP-binding site is contributed by 92 to 100 (LGQGGFGKV). A Phosphoserine modification is found at Ser-117. Lys-124 is an ATP binding site. Phosphotyrosine is present on Tyr-169. The active-site Proton acceptor is Asp-218. The residue at position 222 (Ser-222) is a Phosphoserine. Thr-253 and Thr-258 each carry phosphothreonine. Residue Tyr-266 is modified to Phosphotyrosine. Over residues 378 to 390 (SSTKQAVANSSRS) the composition is skewed to polar residues. Residues 378–419 (SSTKQAVANSSRSSPHHYRYKAGALGAERKRATPGRFGSVEK) are disordered.

The protein belongs to the protein kinase superfamily. Ser/Thr protein kinase family. Interacts with SOBIR1/EVR and RLK5/HAE. Post-translationally, autophosphorylated on serine, threonine and tyrosine residues.

The protein localises to the cell membrane. It localises to the nucleus. The catalysed reaction is L-seryl-[protein] + ATP = O-phospho-L-seryl-[protein] + ADP + H(+). It carries out the reaction L-threonyl-[protein] + ATP = O-phospho-L-threonyl-[protein] + ADP + H(+). Functionally, acts as a spatial inhibitor of signaling that modulates abscission zone cell adhesion and expansion. Acts both directly and indirectly by physically interacting with RLK5/HAE and SOBIR1/EVR at the cell surface. The polypeptide is Probable serine/threonine-protein kinase CST (Arabidopsis thaliana (Mouse-ear cress)).